The sequence spans 160 residues: SsrA-binding protein (160 aa).

The protein belongs to the SmpB family.

It is found in the cytoplasm. Its function is as follows. Required for rescue of stalled ribosomes mediated by trans-translation. Binds to transfer-messenger RNA (tmRNA), required for stable association of tmRNA with ribosomes. tmRNA and SmpB together mimic tRNA shape, replacing the anticodon stem-loop with SmpB. tmRNA is encoded by the ssrA gene; the 2 termini fold to resemble tRNA(Ala) and it encodes a 'tag peptide', a short internal open reading frame. During trans-translation Ala-aminoacylated tmRNA acts like a tRNA, entering the A-site of stalled ribosomes, displacing the stalled mRNA. The ribosome then switches to translate the ORF on the tmRNA; the nascent peptide is terminated with the 'tag peptide' encoded by the tmRNA and targeted for degradation. The ribosome is freed to recommence translation, which seems to be the essential function of trans-translation. The sequence is that of SsrA-binding protein from Mycobacterium leprae (strain Br4923).